Consider the following 561-residue polypeptide: Oxygen-dependent choline dehydrogenase (561 aa).

7 to 36 (DYIIVGAGSAGNVLASRLTEDADVTVLLLE) contributes to the FAD binding site. The active-site Proton acceptor is the His-474.

This sequence belongs to the GMC oxidoreductase family. FAD is required as a cofactor.

It catalyses the reaction choline + A = betaine aldehyde + AH2. The catalysed reaction is betaine aldehyde + NAD(+) + H2O = glycine betaine + NADH + 2 H(+). It functions in the pathway amine and polyamine biosynthesis; betaine biosynthesis via choline pathway; betaine aldehyde from choline (cytochrome c reductase route): step 1/1. Functionally, involved in the biosynthesis of the osmoprotectant glycine betaine. Catalyzes the oxidation of choline to betaine aldehyde and betaine aldehyde to glycine betaine at the same rate. This Paraburkholderia phytofirmans (strain DSM 17436 / LMG 22146 / PsJN) (Burkholderia phytofirmans) protein is Oxygen-dependent choline dehydrogenase.